The chain runs to 162 residues: MTISYEAVRDFLYREARYLDDKQWESWLEMYAPDATFWMPAWDDRDQLTEDPQSQISLIWYGNRSGLEDRVFRIKTERSSATIPDTRTSHNISNLELLEQSDGVCKLRYNWHTMNYRYKTVDHFFGTNFCTLDTCGETPLITAKKVVLKNDYIRQVIDVYHV.

Belongs to the bacterial ring-hydroxylating dioxygenase beta subunit family. As to quaternary structure, this dioxygenase system consists of three proteins: the two subunits of the hydroxylase component (XylX and XylY), and an electron transfer component (XylZ).

The protein operates within xenobiotic degradation; toluene degradation. The chain is Toluate 1,2-dioxygenase subunit beta (xylY) from Pseudomonas putida (Arthrobacter siderocapsulatus).